Reading from the N-terminus, the 123-residue chain is Large ribosomal subunit protein bL12 (123 aa).

This sequence belongs to the bacterial ribosomal protein bL12 family. Homodimer. Part of the ribosomal stalk of the 50S ribosomal subunit. Forms a multimeric L10(L12)X complex, where L10 forms an elongated spine to which 2 to 4 L12 dimers bind in a sequential fashion. Binds GTP-bound translation factors.

In terms of biological role, forms part of the ribosomal stalk which helps the ribosome interact with GTP-bound translation factors. Is thus essential for accurate translation. This chain is Large ribosomal subunit protein bL12, found in Clostridium kluyveri (strain NBRC 12016).